A 156-amino-acid chain; its full sequence is Large ribosomal subunit protein uL22 (156 aa).

It belongs to the universal ribosomal protein uL22 family. Part of the 50S ribosomal subunit.

Functionally, this protein binds specifically to 23S rRNA. It makes multiple contacts with different domains of the 23S rRNA in the assembled 50S subunit and ribosome. In terms of biological role, the globular domain of the protein is located near the polypeptide exit tunnel on the outside of the subunit, while an extended beta-hairpin is found that lines the wall of the exit tunnel in the center of the 70S ribosome. This chain is Large ribosomal subunit protein uL22, found in Methanocaldococcus jannaschii (strain ATCC 43067 / DSM 2661 / JAL-1 / JCM 10045 / NBRC 100440) (Methanococcus jannaschii).